The chain runs to 385 residues: Flavin-dependent monooxygenase (385 aa).

FAD-binding positions include Ala12 to Ala15, Glu34 to Asn36, Tyr44 to Asp47, Arg105, Tyr267, Asp289, and Pro296 to Thr302.

The protein belongs to the aromatic-ring hydroxylase family. Requires FAD as cofactor.

It carries out the reaction 7-chlorotetracycline + NADPH + O2 + H(+) = (1S,10S,10aS)-3-(CONH2)-9-Cl-1-(Me2N)-3,3a,4,10-(HO)4-10-Me-2,5-dioxo-1H,10aH,11H,11aH-cyclopenta[b]anthracen-6-olate + CO + NADP(+) + H2O. The enzyme catalyses a tetracycline + NADPH + O2 + H(+) = a (1S,10aS)-3-(CONH2)-1-(Me2N)-3,3a,4,6-(HO)4-2,5-dioxo-1H,10aH,11H,11aH-cyclopenta[b]anthracene + CO + NADP(+) + H2O. With respect to regulation, inhibited by anhydrotetracycline. In terms of biological role, an FAD-requiring monooxygenase active on tetracycline antibiotic and some of its derivatives, which leads to their inactivation. Expression in E.coli confers high resistance to oxytetracycline, slightly less resistance to tetracycline, moderate resistance to minocycline but no resistance to tigecycline. Degrades tetracycline and oxytetracycline; the reaction requires NADPH. Degrades and confers resistance to chlortetracycline. The protein is Flavin-dependent monooxygenase of Unknown prokaryotic organism.